A 109-amino-acid polypeptide reads, in one-letter code: uncharacterized protein (109 aa).

A helical membrane pass occupies residues 26-48 (VTSIMTVSDINYLLLYLIILLTL).

Its subcellular location is the membrane. This is an uncharacterized protein from Saccharomyces cerevisiae (strain ATCC 204508 / S288c) (Baker's yeast).